The chain runs to 151 residues: Copper transporter 2 (151 aa).

2 helical membrane passes run 42 to 62 (GARG…AVLL) and 97 to 117 (VAYL…LAIV).

The protein belongs to the copper transporter (Ctr) (TC 1.A.56) family. SLC31A subfamily. As to quaternary structure, self-interacts. Interacts with SWEET11 and COPT1.

The protein resides in the cell membrane. Functionally, involved in the transport of copper, in cooperation with SWEET11 and COPT1. Contributes to the removal of copper (Cu) from xylem, and thus to the sensitivity toward bacterial pathogens such as X.oryzae pv. oryzae (Xoo). This Oryza sativa subsp. japonica (Rice) protein is Copper transporter 2 (COPT2).